Here is a 660-residue protein sequence, read N- to C-terminus: DNA ligase (660 aa).

Residues 33-37 (DFVYD), 82-83 (SL), and Glu-110 contribute to the NAD(+) site. Lys-112 (N6-AMP-lysine intermediate) is an active-site residue. The NAD(+) site is built by Arg-133, Glu-167, Lys-281, and Lys-305. Cys-396, Cys-399, Cys-412, and Cys-417 together coordinate Zn(2+). Positions 583–660 (DENRLLAGKK…SFEDIKSYLN (78 aa)) constitute a BRCT domain.

It belongs to the NAD-dependent DNA ligase family. LigA subfamily. It depends on Mg(2+) as a cofactor. Requires Mn(2+) as cofactor.

It catalyses the reaction NAD(+) + (deoxyribonucleotide)n-3'-hydroxyl + 5'-phospho-(deoxyribonucleotide)m = (deoxyribonucleotide)n+m + AMP + beta-nicotinamide D-nucleotide.. Functionally, DNA ligase that catalyzes the formation of phosphodiester linkages between 5'-phosphoryl and 3'-hydroxyl groups in double-stranded DNA using NAD as a coenzyme and as the energy source for the reaction. It is essential for DNA replication and repair of damaged DNA. In Borrelia garinii subsp. bavariensis (strain ATCC BAA-2496 / DSM 23469 / PBi) (Borreliella bavariensis), this protein is DNA ligase.